Here is a 350-residue protein sequence, read N- to C-terminus: Biotin synthase (350 aa).

The Radical SAM core domain occupies 54–278 (REIQLSTLLS…TMPQSYVRLS (225 aa)). Residues Cys-69, Cys-73, and Cys-76 each coordinate [4Fe-4S] cluster. [2Fe-2S] cluster-binding residues include Cys-113, Cys-144, Cys-204, and Arg-276.

The protein belongs to the radical SAM superfamily. Biotin synthase family. In terms of assembly, homodimer. [4Fe-4S] cluster serves as cofactor. It depends on [2Fe-2S] cluster as a cofactor.

It carries out the reaction (4R,5S)-dethiobiotin + (sulfur carrier)-SH + 2 reduced [2Fe-2S]-[ferredoxin] + 2 S-adenosyl-L-methionine = (sulfur carrier)-H + biotin + 2 5'-deoxyadenosine + 2 L-methionine + 2 oxidized [2Fe-2S]-[ferredoxin]. It functions in the pathway cofactor biosynthesis; biotin biosynthesis; biotin from 7,8-diaminononanoate: step 2/2. Functionally, catalyzes the conversion of dethiobiotin (DTB) to biotin by the insertion of a sulfur atom into dethiobiotin via a radical-based mechanism. This Neisseria gonorrhoeae (strain ATCC 700825 / FA 1090) protein is Biotin synthase.